The primary structure comprises 248 residues: Tyrosine recombinase XerD-like (248 aa).

In terms of domain architecture, Core-binding (CB) spans 1 to 72 (MKSYIEPFIA…TANQFLYYLY (72 aa)). A Tyr recombinase domain is found at 85-248 (DTMKVMRTEK…PVTLEKYYKS (164 aa)). Residues lysine 149 and arginine 213 contribute to the active site. Tyrosine 245 acts as the O-(3'-phospho-DNA)-tyrosine intermediate in catalysis.

The protein belongs to the 'phage' integrase family. XerD-like subfamily.

Its subcellular location is the cytoplasm. Its function is as follows. Putative tyrosine recombinase. Not involved in the cutting and rejoining of the recombining DNA molecules on dif(SL) site. This chain is Tyrosine recombinase XerD-like, found in Streptococcus pyogenes serotype M3 (strain ATCC BAA-595 / MGAS315).